Consider the following 499-residue polypeptide: MGLFSAKREPPPVVPTDTITPLRFVDELYPFAFDFSLVFRDVLDPEVLRAAADSVLQRDGWRQLGARLRRDQNSKLEYHLPTHFSKERPLFLFTTDNHTDMSINDHPVLRHVPEPNPDRPTVHQPAAATFRRHMRGPNSPEAFDDWLYNDIPQLAIHIISFSDATIITVTLLHTLTDFLGLMAFYKAWLLTLHGRQDEIAPYIGYLDADPLEGLQQGQAKPPKYVFADREVGRWGYLKFVFRHMWDCYWHPEASLRFFTLPGKFVENLSTSARAELIAAHPERKPEDCFVSDSDVLCAWWTGLMVRNQSPACPPAQSVCLTNRFDSRDVLAKMGLLPSTNISFFGNAAYNASFFAPASAFAGPEKEKLGLLANQVRDSIKLHRTVEQLQAQDAAFRESKARTGHLPLYGEGDMMMCVFTNCYRGRLYQMDFSPALVDKEKSKGKKQALPVFINCTGMESRWSARNATAILGKSENGDWWMSSRLRQDVWERIEAEFERM.

The protein localises to the nucleus. It participates in antibiotic biosynthesis. In terms of biological role, transcriptional regulator; part of the gene cluster that mediates the biosynthesis of sordarin and hypoxysordarin, glycoside antibiotics with a unique tetracyclic diterpene aglycone structure. First, the geranylgeranyl diphosphate synthase sdnC constructs GGDP from farnesyl diphosphate and isopentenyl diphosphate. The diterpene cyclase sdnA then catalyzes the cyclization of GGDP to afford cycloaraneosene. Cycloaraneosene is then hydroxylated four times by the putative cytochrome P450 monooxygenases sdnB, sdnE, sdnF and sdnH to give a hydroxylated cycloaraneosene derivative such as cycloaraneosene-8,9,13,19-tetraol. Although the order of the hydroxylations is unclear, at least C8, C9 and C13 of the cycloaraneosene skeleton are hydroxylated before the sordaricin formation. Dehydration of the 13-hydroxy group of the hydroxylated cycloaraneosene derivative might be catalyzed by an unassigned hypothetical protein such as sdnG and sdnP to construct the cyclopentadiene moiety. The FAD-dependent oxidoreductase sdnN is proposed to catalyze the oxidation at C9 of the hydroxylated cycloaraneosene derivative and also catalyze the Baeyer-Villiger oxidation to give the lactone intermediate. The presumed lactone intermediate would be hydrolyzed to give an acrolein moiety and a carboxylate moiety. Then, [4+2]cycloaddition would occur between the acrolein moiety and the cyclopentadiene moiety to give sordaricin. SdnN might also be involved in the [4+2]cycloaddition after the hypothesized oxidation to accommodate the oxidized product and prompt the [4+2]cycloaddition. GDP-6-deoxy-D-altrose may be biosynthesized from GDP-D-mannose by the putative GDP-mannose-4,6-dehydratase sdnI and the short-chain dehydrogenase sdnK. The glycosyltransferase sdnJ catalyzes the attachment of 6-deoxy-D-altrose onto the 19-hydroxy group of sordaricin to give 4'-O-demethylsordarin. The methyltransferase sdnD would complete the biosynthesis of sordarin. Sordarin can be further modified into hypoxysordarin. The unique acyl chain at the 3'-hydroxy group of hypoxysordarin would be constructed by an iterative type I PKS sdnO and the trans-acting polyketide methyltransferase sdnL. SdnL would be responsible for the introduction of an alpha-methyl group of the polyketide chain. Alternatively, the beta-lactamase-like protein sdnR might be responsible for the cleavage and transfer of the polyketide chain from the PKS sdnO to sordarin. Two putative cytochrome P450 monooxygenases, sdnQ and sdnT, might catalyze the epoxidations of the polyketide chain to complete the biosynthesis of hypoxysordarin. Transcriptional regulators sdnM and sdnS are presumably encoded for the transcriptional regulation of the expression of the sdn gene cluster. The sequence is that of Transcriptional regulator sdnM from Sordaria araneosa (Pleurage araneosa).